The sequence spans 195 residues: Neurturin (195 aa).

An N-terminal signal peptide occupies residues 1-19 (MRRWKAAALVSLICSSLLS). Positions 20–95 (VWMCQEGLLL…RAGPRRRRAR (76 aa)) are excised as a propeptide. Intrachain disulfides connect cysteine 101/cysteine 163, cysteine 128/cysteine 192, and cysteine 132/cysteine 194. Heparan sulfate group-binding residues include arginine 147, arginine 156, and arginine 158.

It belongs to the TGF-beta family. GDNF subfamily. As to quaternary structure, homodimer; disulfide-linked. Interacts with GFRA2 coreceptor and RET: forms a 2:2:2 ternary complex composed of NRTN ligand, GFRA2 and RET receptor. Also forms a 4:4:4 tetrameric complex composed of 4 copies of NRTN ligand, GFRA2 and RET receptor, which prevents endocytosis of RET. In terms of tissue distribution, widespread distribution.

The protein resides in the secreted. In terms of biological role, growth factor that supports the survival of sympathetic neurons in culture. May regulate the development and maintenance of the CNS. Involved in the development of the neural crest. Might control the size of non-neuronal cell population such as haemopoietic cells. Acts by binding to its coreceptor, GFRA2, leading to autophosphorylation and activation of the RET receptor. Heparan sulfate-binding is required for signaling. The polypeptide is Neurturin (Nrtn) (Mus musculus (Mouse)).